Reading from the N-terminus, the 351-residue chain is N-acetyl-gamma-glutamyl-phosphate reductase (351 aa).

Residue C154 is part of the active site.

Belongs to the NAGSA dehydrogenase family. Type 1 subfamily.

It is found in the cytoplasm. The enzyme catalyses N-acetyl-L-glutamate 5-semialdehyde + phosphate + NADP(+) = N-acetyl-L-glutamyl 5-phosphate + NADPH + H(+). It functions in the pathway amino-acid biosynthesis; L-arginine biosynthesis; N(2)-acetyl-L-ornithine from L-glutamate: step 3/4. Its function is as follows. Catalyzes the NADPH-dependent reduction of N-acetyl-5-glutamyl phosphate to yield N-acetyl-L-glutamate 5-semialdehyde. The polypeptide is N-acetyl-gamma-glutamyl-phosphate reductase (Prochlorococcus marinus subsp. pastoris (strain CCMP1986 / NIES-2087 / MED4)).